The primary structure comprises 942 residues: Eukaryotic translation initiation factor 3 subunit A (942 aa).

The region spanning 320-494 (FKKYSSIILL…NTVTFFKDPF (175 aa)) is the PCI domain. 4 coiled-coil regions span residues 499-529 (KAAG…GEEI), 588-669 (ITQT…KQRE), 705-734 (SKLS…AYRK), and 821-912 (IEEV…RKAQ). Residues 502–546 (GTVEEEEEEEEEEGEEVEGEEAETGEEIVEEGEEHENEENKEPEP) are disordered. Acidic residues predominate over residues 504–538 (VEEEEEEEEEEGEEVEGEEAETGEEIVEEGEEHEN). Composition is skewed to basic and acidic residues over residues 836–870 (RKAE…ERKS) and 889–911 (RSAK…ERKA). The disordered stretch occupies residues 836–942 (RKAEIEAEER…KMKLRRASKK (107 aa)).

It belongs to the eIF-3 subunit A family. As to quaternary structure, component of the eukaryotic translation initiation factor 3 (eIF-3) complex.

It localises to the cytoplasm. RNA-binding component of the eukaryotic translation initiation factor 3 (eIF-3) complex, which is involved in protein synthesis of a specialized repertoire of mRNAs and, together with other initiation factors, stimulates binding of mRNA and methionyl-tRNAi to the 40S ribosome. The eIF-3 complex specifically targets and initiates translation of a subset of mRNAs involved in cell proliferation. The polypeptide is Eukaryotic translation initiation factor 3 subunit A (Vanderwaltozyma polyspora (strain ATCC 22028 / DSM 70294 / BCRC 21397 / CBS 2163 / NBRC 10782 / NRRL Y-8283 / UCD 57-17) (Kluyveromyces polysporus)).